We begin with the raw amino-acid sequence, 335 residues long: Fructose-1,6-bisphosphatase class 1 (335 aa).

Positions 90, 113, 115, and 116 each coordinate Mg(2+). Substrate contacts are provided by residues 116-119 (DGSS), N209, Y242, and K272. E278 is a binding site for Mg(2+).

This sequence belongs to the FBPase class 1 family. In terms of assembly, homotetramer. The cofactor is Mg(2+).

Its subcellular location is the cytoplasm. The catalysed reaction is beta-D-fructose 1,6-bisphosphate + H2O = beta-D-fructose 6-phosphate + phosphate. Its pathway is carbohydrate biosynthesis; gluconeogenesis. In Mannheimia succiniciproducens (strain KCTC 0769BP / MBEL55E), this protein is Fructose-1,6-bisphosphatase class 1.